A 947-amino-acid chain; its full sequence is Protocadherin alpha-4 (947 aa).

The first 29 residues, M1–G29, serve as a signal peptide directing secretion. 6 consecutive Cadherin domains span residues Q30–F133, P134–F242, D243–L350, E351–F455, A456–L565, and G588–A678. Over Q30–N697 the chain is Extracellular. A disulfide bond links C96 and C102. N139, N257, and N265 each carry an N-linked (GlcNAc...) asparagine glycan. N548 carries N-linked (GlcNAc...) asparagine glycosylation. The chain crosses the membrane as a helical span at residues V698–Y718. Over T719–Q947 the chain is Cytoplasmic. PXXP repeat units lie at residues P734–P737, P774–P777, P796–P799, P829–P832, P870–P873, and P888–P891. Residues P734–P891 are 6 X 4 AA repeats of P-X-X-P. The segment at T738–Q947 is required for interaction with FYN. Disordered regions lie at residues R754–Y805, G828–P853, and Y868–Q947. Residues D906–K920 show a composition bias toward basic and acidic residues.

In terms of assembly, forms homodimers in trans (molecules expressed by two different cells). Forms promiscuous heterodimers in cis (at the plasma membrane of the same cell) with other protocadherins. Interacts with FYN.

The protein resides in the cell membrane. Functionally, calcium-dependent cell-adhesion protein involved in cells self-recognition and non-self discrimination. Thereby, it is involved in the establishment and maintenance of specific neuronal connections in the brain. In Homo sapiens (Human), this protein is Protocadherin alpha-4.